Here is a 1069-residue protein sequence, read N- to C-terminus: Epstein-Barr nuclear antigen 6 (1069 aa).

Disordered stretches follow at residues 1 to 75 (MESF…RIRR), 353 to 708 (MLAT…PCQS), 733 to 776 (SSMS…LYPG), 884 to 932 (REPR…PPRL), and 1008 to 1069 (PLDI…SELD). The segment covering 50–67 (PDSRDQQSRGQRRGDENR) has biased composition (basic and acidic residues). Composition is skewed to acidic residues over residues 381–391 (VELESSDDELP) and 507–524 (YDDD…EEET). Over residues 543 to 561 (STGSAMSSSHTDPSVTQPS) the composition is skewed to polar residues. Residues 689–708 (QQEPSSQQQPATQSTPPCQS) are compositionally biased toward low complexity. The span at 742 to 751 (SHEEQPRYED) shows a compositional bias: basic and acidic residues. The segment covering 1032 to 1048 (SQATSEAQEILSDNSEI) has biased composition (polar residues).

The protein belongs to the herpesviridae EBNA-6 family. As to quaternary structure, interacts with host CTPB1; this interaction leads to gene repression, but also seems to interfere with the repressive function of CtBP pre-bound to DNA, leading to EBNA6 mediated up-regulation of many host genes. Interacts with host MYC; this interaction enhances MYC stability. Interacts (via N-terminus) with host RBPJ. Interacts (via N-terminus) with host histone H2AX; this interaction facilitates H2AX proteasomal degradation. Interacts with host TP73; this interaction inhibits TP73-mediated apoptotic pathway. Interacts (via N-terminus) with host PIM1; this interaction upregulates and stabilizes PIM1 and induces cell proliferation by inhibiting the growth suppressive properties of p21.

The protein resides in the host nucleus. Its subcellular location is the host nucleus matrix. In terms of biological role, plays an essential role for the activation and immortalization of human B-cells. Represses transcription of viral promoters TP1 and Cp through interaction with host RBPJ, and inhibits EBNA2-mediated activation of these promoters. Targets host chromatin through interactions with host transcription factors, especially RBPJ and IRF4. Alternatively, EBNA6 also regulates the transcription of the EBV oncogene LMP1 in a cell cycle-dependent manner. Modulates the activity of several host proteins involved in cell cycle regulation including host cyclin A, MYC, RB, p21 and p27 mainly through binding to the host SCF(SKP2) complex. Inhibits the promoter of host H2AX and targets H2AX to proteasomal degradation in order to promote latency and cell proliferation. Upregulates host PIM1 expression and stabilization. Potentiates PIM1 to promote cell proliferation by inhibiting the growth suppressive properties of p21. The chain is Epstein-Barr nuclear antigen 6 (EBNA6) from Epstein-Barr virus (strain AG876) (HHV-4).